Here is an 875-residue protein sequence, read N- to C-terminus: DNA gyrase subunit A (875 aa).

The region spanning 34-533 (LPDVRDGLKP…NSADINLEDL (500 aa)) is the Topo IIA-type catalytic domain. The active-site O-(5'-phospho-DNA)-tyrosine intermediate is Tyr122. Residues 560-566 (QRRGGKG) carry the GyrA-box motif. Residues 841-875 (EPVDEEDLDTIDGSAAEGDDEIAPEVDVDDEPEEE) are disordered. The span at 857–875 (EGDDEIAPEVDVDDEPEEE) shows a compositional bias: acidic residues.

It belongs to the type II topoisomerase GyrA/ParC subunit family. Heterotetramer, composed of two GyrA and two GyrB chains. In the heterotetramer, GyrA contains the active site tyrosine that forms a transient covalent intermediate with DNA, while GyrB binds cofactors and catalyzes ATP hydrolysis.

Its subcellular location is the cytoplasm. It catalyses the reaction ATP-dependent breakage, passage and rejoining of double-stranded DNA.. Functionally, a type II topoisomerase that negatively supercoils closed circular double-stranded (ds) DNA in an ATP-dependent manner to modulate DNA topology and maintain chromosomes in an underwound state. Negative supercoiling favors strand separation, and DNA replication, transcription, recombination and repair, all of which involve strand separation. Also able to catalyze the interconversion of other topological isomers of dsDNA rings, including catenanes and knotted rings. Type II topoisomerases break and join 2 DNA strands simultaneously in an ATP-dependent manner. The sequence is that of DNA gyrase subunit A from Shigella flexneri.